Here is a 525-residue protein sequence, read N- to C-terminus: Lysine--tRNA ligase (525 aa).

Mg(2+) contacts are provided by Glu-419 and Glu-426.

The protein belongs to the class-II aminoacyl-tRNA synthetase family. As to quaternary structure, homodimer. Mg(2+) serves as cofactor.

The protein resides in the cytoplasm. The catalysed reaction is tRNA(Lys) + L-lysine + ATP = L-lysyl-tRNA(Lys) + AMP + diphosphate. The sequence is that of Lysine--tRNA ligase (lysS) from Deinococcus radiodurans (strain ATCC 13939 / DSM 20539 / JCM 16871 / CCUG 27074 / LMG 4051 / NBRC 15346 / NCIMB 9279 / VKM B-1422 / R1).